A 766-amino-acid polypeptide reads, in one-letter code: MGNRSLTEADHALLSKPLVPTSAEHTQTQEYPRPFVDGSNSQSGSELQASPQGQFGEKALTSTNRFIPLANDDPGMQHEMGLDPSMRRRREEWAERGAAKIVKDVVDPATGELTKHVVKMGIKDFKFGEQLGDGSYSSVVLATARDSGKKYAVKVLSKEYLIRQKKVKYVTVEKLALQKLNGTKGIFKLFFTFQDEASLYFLLEYAPHGDFLGLIKKYGSLNETCARYYASQIIDAVDSLHNIGIIHRDIKPENILLDKNMKVKLTDFGTAKILPEEPSNTADGKPYFDLYAKSKSFVGTAEYVSPELLNDNYTDSRCDIWAFGCILYQMLAGKPPFKAANEYLTFQKVMKIQYAFTAGFPQIVKDLVKKLLVRDPNDRLTIKQIKAHLFFHEVNFEDGSVWDDNPPEIQPYKINAEAMKPLQKVSESDTTVKMANLQLAGNGHADTPLQAPAATSQEHSVISMTAATAAFNKDYTSQPKLGSKSSTSVRSASNNTDREVIQKKVSKNRASVSSPSISTTSRGKDNRSRSSDAFWSRYLQNMDERVLLMKEVALSTRNLEDSPVGLENVALDYKNPLDIEPPTDSAGKFYKKMFLITNLGRALVFVKRRSLSMWEEQEFELQFELELNDVEKIRFISDQVLEIDGSRTIFIGCKERAVLMKLWKLIHNGMTAKPKVVSPKSDHKMFDKFILQKRQNTKKKNQAPPVPQSNRLINGLPDRCILKTPEEGALHTKRPTSLQTRSSSNYSKLLARSTQMRKNMTRTDEK.

The tract at residues 1 to 52 (MGNRSLTEADHALLSKPLVPTSAEHTQTQEYPRPFVDGSNSQSGSELQASPQ) is disordered. Residues 38–52 (GSNSQSGSELQASPQ) show a composition bias toward polar residues. The Protein kinase domain maps to 125 to 391 (FKFGEQLGDG…IKQIKAHLFF (267 aa)). Residues 135 to 137 (SYS) and lysine 154 each bind ATP. The segment at 156 to 201 (LSKEYLIRQKKVKYVTVEKLALQKLNGTKGIFKLFFTFQDEASLYF) is PIF-pocket. ATP is bound by residues 204 to 206 (EYA) and aspartate 210. The Proton acceptor role is filled by aspartate 249. Glutamate 253 and aspartate 267 together coordinate ATP. A phosphoserine mark is found at serine 294 and serine 296. Positions 476-495 (TSQPKLGSKSSTSVRSASNN) are enriched in polar residues. Disordered regions lie at residues 476–529 (TSQP…NRSR) and 725–745 (PEEG…SSSN). Over residues 511 to 521 (SVSSPSISTTS) the composition is skewed to low complexity. Residues 735–745 (PTSLQTRSSSN) are compositionally biased toward polar residues.

This sequence belongs to the protein kinase superfamily. AGC Ser/Thr protein kinase family. PDPK1 subfamily.

It catalyses the reaction L-seryl-[protein] + ATP = O-phospho-L-seryl-[protein] + ADP + H(+). The enzyme catalyses L-threonyl-[protein] + ATP = O-phospho-L-threonyl-[protein] + ADP + H(+). In terms of biological role, activates YPK1 by phosphorylating of a threonine residue. The polypeptide is Serine/threonine-protein kinase PKH1 (PKH1) (Saccharomyces cerevisiae (strain ATCC 204508 / S288c) (Baker's yeast)).